Here is a 232-residue protein sequence, read N- to C-terminus: Large ribosomal subunit protein uL1 (232 aa).

It belongs to the universal ribosomal protein uL1 family. Part of the 50S ribosomal subunit.

Functionally, binds directly to 23S rRNA. The L1 stalk is quite mobile in the ribosome, and is involved in E site tRNA release. Its function is as follows. Protein L1 is also a translational repressor protein, it controls the translation of the L11 operon by binding to its mRNA. The polypeptide is Large ribosomal subunit protein uL1 (Chlamydia trachomatis serovar L2b (strain UCH-1/proctitis)).